We begin with the raw amino-acid sequence, 339 residues long: HTH-type transcriptional regulator SyrM 2 (339 aa).

An HTH lysR-type domain is found at 32–89 (VDLNLLVELEALLQYRNITHAAQHVGRSQPAMSRALSRLRDMFNDDLLVRGSSGLVPT). The H-T-H motif DNA-binding region spans 49 to 68 (ITHAAQHVGRSQPAMSRALS).

This sequence belongs to the LysR transcriptional regulatory family.

In terms of biological role, acts in trans to stimulate nod gene expression. The sequence is that of HTH-type transcriptional regulator SyrM 2 (syrM2) from Sinorhizobium fredii (strain NBRC 101917 / NGR234).